The chain runs to 638 residues: Ubiquitin-like-specific protease 2 (638 aa).

The span at 1 to 12 shows a compositional bias: basic and acidic residues; that stretch reads MRDSKDALDDKS. Disordered stretches follow at residues 1-79 and 238-314; these read MRDS…PKHL and PQKT…TSND. The span at 238–249 shows a compositional bias: polar residues; that stretch reads PQKTVRSIVKQT. Over residues 250–264 the composition is skewed to low complexity; it reads SSPHSSKMPKHSLPS. Residues 267–314 show a composition bias toward polar residues; that stretch reads TPFNSNSGDSLLSRIKNSNQSSSERPTANNGAQEQNQSSSSAGNTSND. Residues His-440 and Asp-494 contribute to the active site. Thr-526 carries the post-translational modification Phosphothreonine. Residue Cys-544 is part of the active site. The span at 610–619 shows a compositional bias: polar residues; that stretch reads NERQSLSSGS. Residues 610–638 form a disordered region; it reads NERQSLSSGSNDEEDKENDDDLAILPITN. The span at 620–631 shows a compositional bias: acidic residues; sequence NDEEDKENDDDL.

Belongs to the peptidase C48 family.

Its subcellular location is the nucleus. The sequence is that of Ubiquitin-like-specific protease 2 (ulp2) from Schizosaccharomyces pombe (strain 972 / ATCC 24843) (Fission yeast).